The chain runs to 2213 residues: Protein sidekick-1 (2213 aa).

The interval 1 to 73 is disordered; sequence MARGARPSAA…GAGRCGGRRA (73 aa). Residues 23 to 38 are compositionally biased toward low complexity; sequence AGPGRPRGSPPGRARP. Ig-like C2-type domains follow at residues 104–186, 191–277, 293–378, 386–476, and 480–569; these read PYFK…SEVQ, GSFM…SPFI, PTIV…RATA, PYFT…LDVT, and PVFT…ATLT. Cys-126 and Cys-169 are disulfide-bonded. N-linked (GlcNAc...) asparagine glycosylation is found at Asn-271 and Asn-301. 3 disulfides stabilise this stretch: Cys-315–Cys-362, Cys-408–Cys-458, and Cys-501–Cys-553. Asn-550, Asn-563, and Asn-572 each carry an N-linked (GlcNAc...) asparagine glycan. Residues 574–663 form the Ig-like C2-type 6 domain; it reads TSIVHPPEDH…GNDSRMARLE (90 aa). Cys-595 and Cys-647 are oxidised to a cystine. Residues Asn-655, Asn-679, Asn-782, Asn-821, Asn-882, Asn-1015, and Asn-1024 are each glycosylated (N-linked (GlcNAc...) asparagine). Fibronectin type-III domains follow at residues 670-766, 771-867, 872-970, 974-1068, 1072-1171, 1176-1274, 1279-1376, 1380-1474, 1479-1576, 1581-1699, 1704-1800, 1804-1899, and 1902-2000; these read SPQN…LPEE, PPKN…TLQG, PPQN…TQED, AVGH…VPPD, APSN…TLQA, APTS…TRES, APEN…TKDD, PPVR…TEKR, PPRE…TLQD, PPGS…VGEA, APQN…THQA, APSF…AGPA, and SPGS…SAQV. Residues Asn-1282 and Asn-1333 are each glycosylated (N-linked (GlcNAc...) asparagine). N-linked (GlcNAc...) asparagine glycans are attached at residues Asn-1654, Asn-1748, Asn-1767, Asn-1819, and Asn-1893. The chain crosses the membrane as a helical span at residues 2010–2030; the sequence is FLLVMALSSLIVILLVVFALV. Topologically, residues 2031 to 2213 are cytoplasmic; it reads LHGQNKKYKN…TPLTGFSSFV (183 aa). Residues 2075 to 2098 form a disordered region; the sequence is STFSKKNGTRSPPRPSPGGLHYSD. The PDZ-binding signature appears at 2207-2213; that stretch reads TGFSSFV.

Belongs to the sidekick family. Homodimer; mediates homophilic interactions to promote cell adhesion. In terms of tissue distribution, up-regulated in glomeruli in HIV-associated nephropathy. In diseased glomeruli, significantly overexpressed and the expression is no longer restricted to mesangial cells but includes podocytes and parietal epithelial cells.

It localises to the cell membrane. The protein resides in the synapse. Adhesion molecule that promotes lamina-specific synaptic connections in the retina. Expressed in specific subsets of interneurons and retinal ganglion cells (RGCs) and promotes synaptic connectivity via homophilic interactions. In Homo sapiens (Human), this protein is Protein sidekick-1.